Reading from the N-terminus, the 105-residue chain is UPF0235 protein RP839 (105 aa).

The protein belongs to the UPF0235 family.

In Rickettsia prowazekii (strain Madrid E), this protein is UPF0235 protein RP839.